The sequence spans 671 residues: DNA ligase (671 aa).

Residues 32-36, 81-82, and glutamate 113 each bind NAD(+); these read DAEYD and SL. Catalysis depends on lysine 115, which acts as the N6-AMP-lysine intermediate. Positions 136, 173, 290, and 314 each coordinate NAD(+). 4 residues coordinate Zn(2+): cysteine 408, cysteine 411, cysteine 426, and cysteine 432. In terms of domain architecture, BRCT spans 593 to 671; it reads EIDSPFAGKT…ETEMLRLLGS (79 aa).

Belongs to the NAD-dependent DNA ligase family. LigA subfamily. Mg(2+) is required as a cofactor. Requires Mn(2+) as cofactor.

It catalyses the reaction NAD(+) + (deoxyribonucleotide)n-3'-hydroxyl + 5'-phospho-(deoxyribonucleotide)m = (deoxyribonucleotide)n+m + AMP + beta-nicotinamide D-nucleotide.. DNA ligase that catalyzes the formation of phosphodiester linkages between 5'-phosphoryl and 3'-hydroxyl groups in double-stranded DNA using NAD as a coenzyme and as the energy source for the reaction. It is essential for DNA replication and repair of damaged DNA. In Escherichia coli O127:H6 (strain E2348/69 / EPEC), this protein is DNA ligase.